A 147-amino-acid polypeptide reads, in one-letter code: uncharacterized protein (147 aa).

The disordered stretch occupies residues 23 to 48 (EEVSQPEPNTANDSSTEYKGKSKDDF). Positions 28–37 (PEPNTANDSS) are enriched in polar residues. The span at 38-48 (TEYKGKSKDDF) shows a compositional bias: basic and acidic residues. A helical membrane pass occupies residues 85–105 (LMFCIIACSFICAIQFLFFII).

The protein resides in the membrane. This is an uncharacterized protein from Saccharomyces cerevisiae (strain ATCC 204508 / S288c) (Baker's yeast).